The primary structure comprises 232 residues: Large ribosomal subunit protein uL1 (232 aa).

This sequence belongs to the universal ribosomal protein uL1 family. In terms of assembly, part of the 50S ribosomal subunit.

Binds directly to 23S rRNA. The L1 stalk is quite mobile in the ribosome, and is involved in E site tRNA release. Its function is as follows. Protein L1 is also a translational repressor protein, it controls the translation of the L11 operon by binding to its mRNA. This Chlamydia pneumoniae (Chlamydophila pneumoniae) protein is Large ribosomal subunit protein uL1.